Consider the following 658-residue polypeptide: Biosynthetic arginine decarboxylase (658 aa).

N6-(pyridoxal phosphate)lysine is present on Lys127. 307 to 317 (FDVGGGLGVDY) is a binding site for substrate.

Belongs to the Orn/Lys/Arg decarboxylase class-II family. SpeA subfamily. Requires Mg(2+) as cofactor. The cofactor is pyridoxal 5'-phosphate.

It catalyses the reaction L-arginine + H(+) = agmatine + CO2. It functions in the pathway amine and polyamine biosynthesis; agmatine biosynthesis; agmatine from L-arginine: step 1/1. Catalyzes the biosynthesis of agmatine from arginine. The sequence is that of Biosynthetic arginine decarboxylase from Salmonella typhi.